A 123-amino-acid polypeptide reads, in one-letter code: Large ribosomal subunit protein eL8 (123 aa).

The protein belongs to the eukaryotic ribosomal protein eL8 family. In terms of assembly, part of the 50S ribosomal subunit. Probably part of the RNase P complex.

It localises to the cytoplasm. Multifunctional RNA-binding protein that recognizes the K-turn motif in ribosomal RNA, the RNA component of RNase P, box H/ACA, box C/D and box C'/D' sRNAs. This chain is Large ribosomal subunit protein eL8, found in Methanosphaera stadtmanae (strain ATCC 43021 / DSM 3091 / JCM 11832 / MCB-3).